Reading from the N-terminus, the 164-residue chain is uncharacterized protein (164 aa).

This is an uncharacterized protein from Arabidopsis thaliana (Mouse-ear cress).